We begin with the raw amino-acid sequence, 595 residues long: Threonine dehydratase 2 biosynthetic, chloroplastic (595 aa).

Residues 1–51 (MEFLCLAPTRSFSTNPKLTKSIPSDHTSTTSRIFTYQNMRGSTMRPLALPL) constitute a chloroplast transit peptide. An N6-(pyridoxal phosphate)lysine modification is found at K143. 2 ACT-like domains span residues 420 to 492 (ALLA…NLSH) and 514 to 585 (IFGE…LDNY).

It belongs to the serine/threonine dehydratase family. Homotetramer. Requires pyridoxal 5'-phosphate as cofactor. Proteolytically cleaved by a chymotrypsin-like digestive protease in the midgut of the lepidopteran insects to remove the C-terminal regulatory domain, which allows efficient metabolizing of threonine in the presence of high isoleucine levels in the gut. As to expression, expressed in floral buds, 8-9 mm long flowers 1 to 2 days before anthesis, open flowers and floral organs including sepals, petals, stamens and carpels of 8-9 mm flowers (at protein level). Expressed in very early floral meristems of the anantha. Over 500-fold expression in mature flowers compared to leaves. Expressed in sepals, petals, stamens and carpels of the mature flower. In sepals, mostly expressed in the abaxial mesophyll cells and in petals in parenchymal cells. Not expressed in epidermal or vascular tissues of sepals and petals. In stamens, expressed in parenchymal cells of the connective and lobes, but not expressed in differentiated tissues such as tapetum (TP), stomium (SM), or pollen grains (PG). Not expressed in roots or seeds. High level of expression in immature flower buds, unopened flowers and opened flowers. Not expressed in unstressed leaves, root, stem or petiole.

It localises to the plastid. The protein localises to the chloroplast. It catalyses the reaction L-threonine = 2-oxobutanoate + NH4(+). The enzyme catalyses L-serine = pyruvate + NH4(+). It functions in the pathway amino-acid biosynthesis; L-isoleucine biosynthesis; 2-oxobutanoate from L-threonine: step 1/1. Threonine dehydratase 2 biosynthetic, chloroplastic: Strongly inhibited by 1 mM isoleucine. Processed threonine dehydratase 2: Not inhibited by isoleucine. Functionally, not required for normal growth and development of the plant. In terms of biological role, involved in defense against lepidopteran, but not coleopteran herbivore insects. Acts in the insect gut to degrade threonine, which is an essential and limiting nutrient for the growth of lepidopteran larvae. Active against both L-threonine and L-serine. This chain is Threonine dehydratase 2 biosynthetic, chloroplastic, found in Solanum lycopersicum (Tomato).